Reading from the N-terminus, the 239-residue chain is Orotidine 5'-phosphate decarboxylase (239 aa).

Substrate-binding positions include Asp-10, Lys-32, 59–68, Thr-122, Arg-184, Gln-193, Gly-213, and Arg-214; that span reads DLKLHDIPNT. The active-site Proton donor is the Lys-61.

It belongs to the OMP decarboxylase family. Type 1 subfamily. In terms of assembly, homodimer.

The catalysed reaction is orotidine 5'-phosphate + H(+) = UMP + CO2. Its pathway is pyrimidine metabolism; UMP biosynthesis via de novo pathway; UMP from orotate: step 2/2. Its function is as follows. Catalyzes the decarboxylation of orotidine 5'-monophosphate (OMP) to uridine 5'-monophosphate (UMP). In Geobacillus sp. (strain WCH70), this protein is Orotidine 5'-phosphate decarboxylase.